Here is a 149-residue protein sequence, read N- to C-terminus: MHCPFCSATDTKVIDSRLVADGHQVRRRRECAECHERFTTFEGAELVMPRVVKQDGSRQPFDEEKLRGGMLRAVEKRPVSMDQIEQALTKIKSTLRATGEREVKSEMIGNLMMDQLVNLDKVAYIRFASVYRAFEDVSEFGDAIAKLQK.

The segment at 3–34 (CPFCSATDTKVIDSRLVADGHQVRRRRECAEC) is a zinc-finger region. In terms of domain architecture, ATP-cone spans 49 to 139 (PRVVKQDGSR…VYRAFEDVSE (91 aa)).

Belongs to the NrdR family. Zn(2+) is required as a cofactor.

Negatively regulates transcription of bacterial ribonucleotide reductase nrd genes and operons by binding to NrdR-boxes. The polypeptide is Transcriptional repressor NrdR (Shewanella sediminis (strain HAW-EB3)).